A 296-amino-acid chain; its full sequence is 4-hydroxy-tetrahydrodipicolinate synthase (296 aa).

Thr46 is a pyruvate binding site. The active-site Proton donor/acceptor is Tyr134. Lys162 acts as the Schiff-base intermediate with substrate in catalysis. Ile204 contacts pyruvate.

This sequence belongs to the DapA family. In terms of assembly, homotetramer; dimer of dimers.

It is found in the cytoplasm. It carries out the reaction L-aspartate 4-semialdehyde + pyruvate = (2S,4S)-4-hydroxy-2,3,4,5-tetrahydrodipicolinate + H2O + H(+). Its pathway is amino-acid biosynthesis; L-lysine biosynthesis via DAP pathway; (S)-tetrahydrodipicolinate from L-aspartate: step 3/4. Functionally, catalyzes the condensation of (S)-aspartate-beta-semialdehyde [(S)-ASA] and pyruvate to 4-hydroxy-tetrahydrodipicolinate (HTPA). The polypeptide is 4-hydroxy-tetrahydrodipicolinate synthase (Clostridium novyi (strain NT)).